The following is a 138-amino-acid chain: Acidic phospholipase A2 inhibitor vaspin A chain (138 aa).

An N-terminal signal peptide occupies residues 1-16 (MRTLWIVAVCLIGVEG). Cystine bridges form between C42–C131, C44–C60, C59–C111, C65–C138, C66–C104, C73–C97, and C91–C102.

Belongs to the phospholipase A2 family. Group II subfamily. D49 sub-subfamily. Heterodimer of a toxic basic protein having phospholipase A2 activity (B chain (AC Q8JFG0)) and a non-toxic acidic protein functioning as its inhibitor (A chain). Expressed by the venom gland.

The protein localises to the secreted. Its function is as follows. Heterodimer: postsynaptic neurotoxin. Monomer: the acidic chain inhibits the basic phospholipase A2 of the complex. The sequence is that of Acidic phospholipase A2 inhibitor vaspin A chain from Vipera aspis aspis (Aspic viper).